A 30-amino-acid chain; its full sequence is Snaclec coagulation factor IX/factor X-binding protein subunit A (30 aa).

The region spanning 1–30 is the C-type lectin domain; it reads DCPSDWSPYEGHCYKHFIKWMNNEDAERFC. A disulfide bond links Cys2 and Cys13.

The protein belongs to the snaclec family. As to quaternary structure, heterodimer of subunits A and B; disulfide-linked. Expressed by the venom gland.

The protein localises to the secreted. Its function is as follows. Anticoagulant protein which binds to the gamma-carboxyglutamic acid-domain regions of factors IX (F9) and factor X (F10) in the presence of calcium with a 1 to 1 stoichiometry. This is Snaclec coagulation factor IX/factor X-binding protein subunit A from Bothrops jararaca (Jararaca).